The sequence spans 184 residues: Endothelial cell-specific molecule 1 (184 aa).

The N-terminal stretch at 1–21 (MKSLLLLTTLLVPLHLGMAWS) is a signal peptide. An IGFBP N-terminal domain is found at 24–102 (YAVDCPEHCD…GDEFGICKDC (79 aa)). Disulfide bonds link Cys-28–Cys-51, Cys-32–Cys-53, Cys-37–Cys-54, Cys-43–Cys-57, Cys-65–Cys-83, and Cys-77–Cys-99. The segment at 145-184 (RTSASHTERDSASGDGNAVREEIGEGNAARPSVMKWLNPR) is disordered. The segment covering 150-167 (HTERDSASGDGNAVREEI) has biased composition (basic and acidic residues). An O-linked (Xyl...) (chondroitin sulfate) serine glycan is attached at Ser-157.

O-glycosylated; contains chondroitin sulfate and dermatan sulfate.

Its subcellular location is the secreted. Involved in angiogenesis; promotes angiogenic sprouting. May have potent implications in lung endothelial cell-leukocyte interactions. The protein is Endothelial cell-specific molecule 1 (Esm1) of Mus musculus (Mouse).